The chain runs to 329 residues: Serpentine receptor class alpha-7 (329 aa).

7 helical membrane passes run 25–45 (YVYLSLISLTFIFSYFAVKIV), 57–77 (ILLFHNLVSANLHQLLYLFSA), 104–124 (YLKVLVTGISGMIYGQTGLLL), 143–163 (VGIAISIAILFLSLITGKIII), 187–207 (RLFASIYTFISSFNLVFSVLL), 237–257 (TICFLTFVQFIFMFIYSFGIF), and 273–293 (FIVVWFYTIPFIAALFPILLV).

It belongs to the nematode receptor-like protein sra family.

It localises to the membrane. The sequence is that of Serpentine receptor class alpha-7 (sra-7) from Caenorhabditis elegans.